Consider the following 229-residue polypeptide: Orotidine 5'-phosphate decarboxylase (229 aa).

Substrate contacts are provided by residues aspartate 10, lysine 32, 59 to 68, threonine 119, arginine 180, glutamine 189, glycine 209, and arginine 210; that span reads DLKFHDIPNT. Lysine 61 serves as the catalytic Proton donor.

It belongs to the OMP decarboxylase family. Type 1 subfamily. Homodimer.

The catalysed reaction is orotidine 5'-phosphate + H(+) = UMP + CO2. Its pathway is pyrimidine metabolism; UMP biosynthesis via de novo pathway; UMP from orotate: step 2/2. Functionally, catalyzes the decarboxylation of orotidine 5'-monophosphate (OMP) to uridine 5'-monophosphate (UMP). The chain is Orotidine 5'-phosphate decarboxylase from Legionella pneumophila (strain Paris).